The primary structure comprises 383 residues: Homeobox protein SHOOT MERISTEMLESS (383 aa).

Residues 37–58 (HQQHHGHDQQHQHQQQHDGYAY) are disordered. The ELK domain occupies 263-283 (ELKGQLLRKYSGYLGSLKQEF). A DNA-binding region (homeobox; TALE-type) is located at residues 284 to 347 (MKKRKKGKLP…NQRKRHWKPS (64 aa)).

The protein belongs to the TALE/KNOX homeobox family.

The protein resides in the nucleus. Functionally, required for shoot apical meristem formation during embryogenesis. Probably binds to the DNA sequence 5'-TGAC-3'. This is Homeobox protein SHOOT MERISTEMLESS (STM) from Brassica oleracea (Wild cabbage).